The primary structure comprises 1069 residues: Protogenin B (1069 aa).

The signal sequence occupies residues 1–26 (MGSVRWKTHQQWLIIFWILSFSGVFG). The Extracellular portion of the chain corresponds to 27–936 (FSELWFSIEP…LYHIDEKSMS (910 aa)). 4 consecutive Ig-like domains span residues 30-117 (LWFS…ARLT), 122-208 (LVFS…AELV), 221-308 (PLII…GNVT), and 312-396 (PSLV…SRLI). Intrachain disulfides connect C51/C100 and C143/C191. N-linked (GlcNAc...) asparagine glycans are attached at residues N81, N88, N180, and N229. A disulfide bridge links C242 with C290. Residues N299 and N306 are each glycosylated (N-linked (GlcNAc...) asparagine). A disordered region spans residues 317-336 (KPESQTRPRAGTARFSCQAE). C333 and C380 are disulfide-bonded. Fibronectin type-III domains are found at residues 406–500 (APRN…TLED), 502–601 (PLRT…TPKT), 608–701 (PAPN…CPST), 711–804 (PPDH…TLLE), and 809–904 (PPES…VKGK). N458, N473, and N560 each carry an N-linked (GlcNAc...) asparagine glycan. Residues 590-605 (PSAWSSHRTPKTSSAT) are compositionally biased toward polar residues. The segment at 590-609 (PSAWSSHRTPKTSSATVPPA) is disordered. Residues N618, N720, and N834 are each glycosylated (N-linked (GlcNAc...) asparagine). The helical transmembrane segment at 937 to 957 (GIIVGVCIALSCIILCIFILL) threads the bilayer. Residues 958–1069 (SKTQTQKSAS…KTVLCYEDEA (112 aa)) lie on the Cytoplasmic side of the membrane.

It belongs to the immunoglobulin superfamily. DCC family. Initially expressed in the ventral forebrain and ventral spinal cord. Later, also expressed in the midbrain and in parts of the diencephalon and hindbrain.

It is found in the membrane. In terms of biological role, may play a role in anteroposterior axis elongation. In Danio rerio (Zebrafish), this protein is Protogenin B.